The following is a 491-amino-acid chain: tRNA-2-methylthio-N(6)-dimethylallyladenosine synthase (491 aa).

Residues 54–172 (KTYHIKTFGC…ILNLLEQVIF (119 aa)) enclose the MTTase N-terminal domain. [4Fe-4S] cluster-binding residues include Cys63, Cys99, Cys133, Cys209, Cys213, and Cys216. The Radical SAM core domain maps to 195–426 (RTNNLKGFVN…NEMVKTFSKK (232 aa)). Residues 429–491 (EKYVNKVLDV…RFTLNGKMID (63 aa)) form the TRAM domain.

This sequence belongs to the methylthiotransferase family. MiaB subfamily. In terms of assembly, monomer. [4Fe-4S] cluster is required as a cofactor.

The protein localises to the cytoplasm. It catalyses the reaction N(6)-dimethylallyladenosine(37) in tRNA + (sulfur carrier)-SH + AH2 + 2 S-adenosyl-L-methionine = 2-methylsulfanyl-N(6)-dimethylallyladenosine(37) in tRNA + (sulfur carrier)-H + 5'-deoxyadenosine + L-methionine + A + S-adenosyl-L-homocysteine + 2 H(+). Its function is as follows. Catalyzes the methylthiolation of N6-(dimethylallyl)adenosine (i(6)A), leading to the formation of 2-methylthio-N6-(dimethylallyl)adenosine (ms(2)i(6)A) at position 37 in tRNAs that read codons beginning with uridine. The polypeptide is tRNA-2-methylthio-N(6)-dimethylallyladenosine synthase (Malacoplasma penetrans (strain HF-2) (Mycoplasma penetrans)).